An 82-amino-acid chain; its full sequence is Sec-independent protein translocase protein TatA (82 aa).

A helical transmembrane segment spans residues 1–21 (MHPPSITQLLIILLIIVLLFG). A disordered region spans residues 42-82 (AVKEDEEDNQSEENTKSQIKQSESKNENVSKTHTDSQKQDT). Residues 63-82 (SESKNENVSKTHTDSQKQDT) show a composition bias toward basic and acidic residues.

The protein belongs to the TatA/E family. As to quaternary structure, the Tat system comprises two distinct complexes: a TatABC complex, containing multiple copies of TatA, TatB and TatC subunits, and a separate TatA complex, containing only TatA subunits. Substrates initially bind to the TatABC complex, which probably triggers association of the separate TatA complex to form the active translocon.

The protein resides in the cell inner membrane. In terms of biological role, part of the twin-arginine translocation (Tat) system that transports large folded proteins containing a characteristic twin-arginine motif in their signal peptide across membranes. TatA could form the protein-conducting channel of the Tat system. The polypeptide is Sec-independent protein translocase protein TatA (Helicobacter hepaticus (strain ATCC 51449 / 3B1)).